A 208-amino-acid polypeptide reads, in one-letter code: MENHMKVVAFERQQQGTGASRRLRNAGKTTGIVYGGEAAPQMIELDHNALWHALKKEAFHSSILDLEVAGKSQRVLLRDVQYHPFRQLVLHVDFQRIDPKKKLHTKVPLHFLNAESSPAVKLSSAVVSHVVTEIEVECLPADLPEFLEVDLSKIEAGQSLHAKDIVLPNGVALTPHVDAENPVVASATIPAGAVSEEAAAGEGETPAA.

This sequence belongs to the bacterial ribosomal protein bL25 family. CTC subfamily. As to quaternary structure, part of the 50S ribosomal subunit; part of the 5S rRNA/L5/L18/L25 subcomplex. Contacts the 5S rRNA. Binds to the 5S rRNA independently of L5 and L18.

Its function is as follows. This is one of the proteins that binds to the 5S RNA in the ribosome where it forms part of the central protuberance. This Burkholderia thailandensis (strain ATCC 700388 / DSM 13276 / CCUG 48851 / CIP 106301 / E264) protein is Large ribosomal subunit protein bL25.